The primary structure comprises 277 residues: Sulfur carrier protein FdhD (277 aa).

Cys-121 acts as the Cysteine persulfide intermediate in catalysis. A Mo-bis(molybdopterin guanine dinucleotide)-binding site is contributed by Phe-260 to Arg-265.

This sequence belongs to the FdhD family.

The protein resides in the cytoplasm. Its function is as follows. Required for formate dehydrogenase (FDH) activity. Acts as a sulfur carrier protein that transfers sulfur from IscS to the molybdenum cofactor prior to its insertion into FDH. The polypeptide is Sulfur carrier protein FdhD (Escherichia coli O6:H1 (strain CFT073 / ATCC 700928 / UPEC)).